A 129-amino-acid polypeptide reads, in one-letter code: Large ribosomal subunit protein bL17 (129 aa).

This sequence belongs to the bacterial ribosomal protein bL17 family. In terms of assembly, part of the 50S ribosomal subunit. Contacts protein L32.

The protein is Large ribosomal subunit protein bL17 of Actinobacillus succinogenes (strain ATCC 55618 / DSM 22257 / CCUG 43843 / 130Z).